We begin with the raw amino-acid sequence, 233 residues long: Lipoprotein-releasing system ATP-binding protein LolD (233 aa).

The ABC transporter domain maps to 6–233 (LQCDNLCKRY…TAELSLMGAE (228 aa)). ATP is bound at residue 42 to 49 (GSSGSGKS).

Belongs to the ABC transporter superfamily. Lipoprotein translocase (TC 3.A.1.125) family. As to quaternary structure, the complex is composed of two ATP-binding proteins (LolD) and two transmembrane proteins (LolC and LolE).

The protein resides in the cell inner membrane. Its function is as follows. Part of the ABC transporter complex LolCDE involved in the translocation of mature outer membrane-directed lipoproteins, from the inner membrane to the periplasmic chaperone, LolA. Responsible for the formation of the LolA-lipoprotein complex in an ATP-dependent manner. The chain is Lipoprotein-releasing system ATP-binding protein LolD from Salmonella choleraesuis (strain SC-B67).